A 421-amino-acid polypeptide reads, in one-letter code: Succinate--CoA ligase [ADP-forming] subunit beta, mitochondrial (421 aa).

Residues M1–R26 constitute a mitochondrion transit peptide. In terms of domain architecture, ATP-grasp spans A35 to A278. ATP-binding positions include K74, G81–G83, and E141. Mg(2+) contacts are provided by N233 and D247. Substrate-binding positions include N298 and G355–M357.

The protein belongs to the succinate/malate CoA ligase beta subunit family. Heterodimer of an alpha and a beta subunit. The cofactor is Mg(2+).

Its subcellular location is the mitochondrion. It catalyses the reaction succinate + ATP + CoA = succinyl-CoA + ADP + phosphate. It participates in carbohydrate metabolism; tricarboxylic acid cycle; succinate from succinyl-CoA (ligase route): step 1/1. Succinyl-CoA synthetase functions in the citric acid cycle (TCA), coupling the hydrolysis of succinyl-CoA to the synthesis of ATP and thus represents the only step of substrate-level phosphorylation in the TCA. The beta subunit provides nucleotide specificity of the enzyme and binds the substrate succinate, while the binding sites for coenzyme A and phosphate are found in the alpha subunit. The polypeptide is Succinate--CoA ligase [ADP-forming] subunit beta, mitochondrial (Arabidopsis thaliana (Mouse-ear cress)).